The primary structure comprises 218 residues: Ras-related protein Rab11E (218 aa).

20–27 (GDSGVGKS) lines the GTP pocket. The Effector region signature appears at 42–50 (SKSTIGVEF). Residues 68–72 (DTAGQ) and 126–129 (NKSD) each bind GTP. S-geranylgeranyl cysteine attachment occurs at residues Cys215 and Cys216.

This sequence belongs to the small GTPase superfamily. Rab family.

Its subcellular location is the cell membrane. The protein is Ras-related protein Rab11E (RAB11E) of Lotus japonicus (Lotus corniculatus var. japonicus).